We begin with the raw amino-acid sequence, 94 residues long: Co-chaperonin GroES (94 aa).

Belongs to the GroES chaperonin family. As to quaternary structure, heptamer of 7 subunits arranged in a ring. Interacts with the chaperonin GroEL.

Its subcellular location is the cytoplasm. In terms of biological role, together with the chaperonin GroEL, plays an essential role in assisting protein folding. The GroEL-GroES system forms a nano-cage that allows encapsulation of the non-native substrate proteins and provides a physical environment optimized to promote and accelerate protein folding. GroES binds to the apical surface of the GroEL ring, thereby capping the opening of the GroEL channel. In Clostridium novyi (strain NT), this protein is Co-chaperonin GroES.